Reading from the N-terminus, the 544-residue chain is Aspartokinase 2, chloroplastic (544 aa).

A chloroplast-targeting transit peptide spans 1 to 84 (MASLQLYGVK…SSGTGKELTC (84 aa)). Positions 87, 90, and 119 each coordinate ATP. Glutamate 203 is a binding site for substrate. ACT domains follow at residues 401 to 479 (IAST…RRSI) and 481 to 544 (SLIG…ETDP).

The protein belongs to the aspartokinase family. Expressed in stems, leaves, floral organs and young seedlings.

It localises to the plastid. The protein resides in the chloroplast. The enzyme catalyses L-aspartate + ATP = 4-phospho-L-aspartate + ADP. Its pathway is amino-acid biosynthesis; L-lysine biosynthesis via DAP pathway; (S)-tetrahydrodipicolinate from L-aspartate: step 1/4. It participates in amino-acid biosynthesis; L-methionine biosynthesis via de novo pathway; L-homoserine from L-aspartate: step 1/3. It functions in the pathway amino-acid biosynthesis; L-threonine biosynthesis; L-threonine from L-aspartate: step 1/5. Allosterically inhibited by lysine, but not by S-adenosyl-L-methionine (SAM). K(0.5) for lysine in the presence of physiological concentrations of substrates is 12.5 uM. No inhibition by threonine or leucine and no activation or inhibition by alanine, cysteine, isoleucine, serine, valine, methionine, glutamine, asparagine, glutamic acid or arginine. In terms of biological role, involved in the first step of essential amino acids lysine, threonine, methionine and isoleucine synthesis via the aspartate-family pathway. This is Aspartokinase 2, chloroplastic (AK2) from Arabidopsis thaliana (Mouse-ear cress).